Here is a 250-residue protein sequence, read N- to C-terminus: Envelope glycoprotein L (250 aa).

Residues 1–18 (MELLLFVMSLILLTFSKA) form the signal peptide. Residues 31–239 (KLDDCIAAVI…EAYNSKLPFR (209 aa)) enclose the gL betaherpesvirus-type domain. The cysteines at positions 136 and 141 are disulfide-linked.

This sequence belongs to the herpesviridae glycoprotein L (gL) family. Betaherpesvirinae gL subfamily. Interacts with glycoprotein H (gH); this interaction is necessary for the correct processing and cell surface expression of gH. Part of a gH-gL-gO complex.

Its subcellular location is the virion membrane. The protein localises to the host cell membrane. It localises to the host Golgi apparatus. The protein resides in the host trans-Golgi network. The heterodimer glycoprotein H-glycoprotein L is required for the fusion of viral and plasma membranes leading to virus entry into the host cell. Acts as a functional inhibitor of gH and maintains gH in an inhibited form. Upon binding to host integrins, gL dissociates from gH leading to activation of the viral fusion glycoproteins gB and gH. This chain is Envelope glycoprotein L, found in Homo sapiens (Human).